Reading from the N-terminus, the 428-residue chain is Phosphomethylpyrimidine synthase (428 aa).

Residues N66, M95, Y124, H163, S185–G187, D226–R229, and E265 each bind substrate. H269 is a Zn(2+) binding site. Y292 provides a ligand contact to substrate. H333 is a binding site for Zn(2+). [4Fe-4S] cluster is bound by residues C407, C410, and C414.

The protein belongs to the ThiC family. [4Fe-4S] cluster is required as a cofactor.

It catalyses the reaction 5-amino-1-(5-phospho-beta-D-ribosyl)imidazole + S-adenosyl-L-methionine = 4-amino-2-methyl-5-(phosphooxymethyl)pyrimidine + CO + 5'-deoxyadenosine + formate + L-methionine + 3 H(+). The protein operates within cofactor biosynthesis; thiamine diphosphate biosynthesis. Its function is as follows. Catalyzes the synthesis of the hydroxymethylpyrimidine phosphate (HMP-P) moiety of thiamine from aminoimidazole ribotide (AIR) in a radical S-adenosyl-L-methionine (SAM)-dependent reaction. The sequence is that of Phosphomethylpyrimidine synthase from Thermococcus kodakarensis (strain ATCC BAA-918 / JCM 12380 / KOD1) (Pyrococcus kodakaraensis (strain KOD1)).